A 301-amino-acid chain; its full sequence is m7GpppX diphosphatase (301 aa).

Substrate contacts are provided by residues Glu154, Lys176, and 237 to 248; that span reads HYQPSFYHLHVH. The short motif at 244 to 248 is the Histidine triad motif element; sequence HLHVH. The Nucleophile role is filled by His246.

It belongs to the HIT family.

It is found in the nucleus. The enzyme catalyses a 5'-end (N(7)-methyl 5'-triphosphoguanosine)-ribonucleoside in mRNA + H2O = N(7)-methyl-GMP + a 5'-end diphospho-ribonucleoside in mRNA + 2 H(+). It carries out the reaction a 5'-end (N(2),N(2),N(7)-trimethyl 5'-triphosphoguanosine)-ribonucleoside in mRNA + H2O = (N(2),N(2),N(7))-trimethyl-GMP + a 5'-end diphospho-ribonucleoside in mRNA + 2 H(+). The hydrolytic product 7-methylguanosine diphosphate (m7GDP) efficiently inhibits the decapping scavenger activity and acts as a competitive inhibitor in vitro. Decapping scavenger enzyme that catalyzes the cleavage of a residual cap structure following the degradation of mRNAs of the 3'-&gt;5' exosome-mediated mRNA decay pathway. Hydrolyzes cap analog structures like 7-methylguanosine nucleoside triphosphate (m7GpppG) and tri-methyl guanosine nucleoside triphosphate (m3(2,2,7)GpppG) with up to 2 nucleotide substrates (small capped oligoribonucleotides) and specifically releases 5'-phosphorylated RNA fragments and 7-methylguanosine monophosphate (m7GMP). Does not hydrolyze unmethylated cap analog (GpppG) and shows no decapping activity on intact m7GpppG-capped mRNA molecules. Does not hydrolyze 7-methylguanosine diphosphate (m7GDP) and tri-methylguanosine diphosphate (m3(2,2,7)GDP) to m(7)GMP and m3(2,2,7)GMP, respectively. May also play a role in the 5'-&gt;3 mRNA decay pathway; m7GDP, the downstream product released by the 5'-&gt;3' mRNA mediated decapping activity, may be also converted by dcs-1 to m7GMP. Binds to m7GpppG and strongly to m7GDP. The sequence is that of m7GpppX diphosphatase from Ascaris suum (Pig roundworm).